The following is a 33-amino-acid chain: Gastrin (33 aa).

Gln1 is subject to Pyrrolidone carboxylic acid. Tyr28 bears the Sulfotyrosine mark. Phe33 is subject to Phenylalanine amide.

Belongs to the gastrin/cholecystokinin family. Sulfation enhances proteolytic processing, and blocks peptide degradation. Levels of sulfation differ between proteolytically-cleaved gastrins and between tissues.

The protein localises to the secreted. In terms of biological role, gastrin stimulates the stomach mucosa to produce and secrete hydrochloric acid and the pancreas to secrete its digestive enzymes. It also stimulates smooth muscle contraction and increases blood circulation and water secretion in the stomach and intestine. The sequence is that of Gastrin (GAST) from Macropus giganteus (Eastern gray kangaroo).